A 611-amino-acid chain; its full sequence is Podocan (611 aa).

Positions 1-23 are cleaved as a signal peptide; that stretch reads MAGSRGLPLLLLVLQLFLGPVLP. Positions 60-97 constitute an LRRNT domain; the sequence is PEPGPATVDCPRDCACSQEGVVDCGGIDLREFPGDLPE. LRR repeat units follow at residues 98 to 119, 122 to 145, 148 to 169, 170 to 190, and 193 to 213; these read HTNH…ELSR, RLET…AFEH, SLNY…LPNA, LISV…TFGQ, and NLRS…PDHM. N-linked (GlcNAc...) asparagine glycosylation is present at N215. LRR repeat units lie at residues 219-239, 240-261, 264-284, 290-311, 312-332, 335-358, 361-382, 383-403, 406-427, 432-453, 477-490, 503-523, 524-545, 548-569, and 574-583; these read NVEI…HLPP, ALYK…AFSE, NLRE…DNET, SLEY…LPRS, LVLL…VLTP, NLEY…AFQG, KLHT…LPRR, VRTL…DFAT, FLEE…RDAF, LLRS…LPKN, QLRE…RLRS, GLQL…GLPP, SLEY…AFDS, NLKG…ESAF, and HLQVLDIEGN. A glycan (N-linked (GlcNAc...) asparagine) is linked at N282. N411 carries N-linked (GlcNAc...) asparagine glycosylation. A disordered region spans residues 585–611; it reads EFGNGSKDKDEEEEEEEEEEDEEEETR. Positions 594–611 are enriched in acidic residues; that stretch reads DEEEEEEEEEEDEEEETR.

The protein belongs to the small leucine-rich proteoglycan (SLRP) family. SLRP class V subfamily. Binds to type I collagen. Post-translationally, N-glycosylated. As to expression, kidney. Expressed in podocytes and likely vascular endothelial cells within the glomerulus.

Its subcellular location is the secreted. It localises to the extracellular space. The protein resides in the extracellular matrix. In terms of biological role, negatively regulates cell proliferation and cell migration, especially in smooth muscle cells. The sequence is that of Podocan (Podn) from Mus musculus (Mouse).